The primary structure comprises 120 residues: NAD(P)H-quinone oxidoreductase subunit 3, chloroplastic (120 aa).

The next 3 helical transmembrane spans lie at 9 to 29 (IFWA…FISG), 64 to 84 (MFAL…PWAM), and 88 to 108 (VLGV…ILGL).

Belongs to the complex I subunit 3 family. In terms of assembly, NDH is composed of at least 16 different subunits, 5 of which are encoded in the nucleus.

The protein resides in the plastid. Its subcellular location is the chloroplast thylakoid membrane. The catalysed reaction is a plastoquinone + NADH + (n+1) H(+)(in) = a plastoquinol + NAD(+) + n H(+)(out). It catalyses the reaction a plastoquinone + NADPH + (n+1) H(+)(in) = a plastoquinol + NADP(+) + n H(+)(out). NDH shuttles electrons from NAD(P)H:plastoquinone, via FMN and iron-sulfur (Fe-S) centers, to quinones in the photosynthetic chain and possibly in a chloroplast respiratory chain. The immediate electron acceptor for the enzyme in this species is believed to be plastoquinone. Couples the redox reaction to proton translocation, and thus conserves the redox energy in a proton gradient. In Barbarea verna (Land cress), this protein is NAD(P)H-quinone oxidoreductase subunit 3, chloroplastic.